Consider the following 176-residue polypeptide: Macro domain-containing protein LMOf2365_2748 (176 aa).

In terms of domain architecture, Macro spans 1-175; the sequence is MEITVVKGDI…LYNKLINSEV (175 aa).

It belongs to the MacroD-type family.

This is Macro domain-containing protein LMOf2365_2748 from Listeria monocytogenes serotype 4b (strain F2365).